We begin with the raw amino-acid sequence, 856 residues long: Phospholipase D gamma 2 (856 aa).

Residues 21-161 form the C2 domain; that stretch reads PLATSSGSLM…CSGNRIEGLF (141 aa). Asp-223 contacts Ca(2+). Residues 362-397 form the PLD phosphodiesterase 1 domain; it reads TIYTHHQKTMIVDAEAAQNRRKIVAFVGGLDLCNGR. Active-site residues include His-367, Lys-369, and Asp-374. An a 1,2-diacyl-sn-glycero-3-phosphate-binding site is contributed by His-367. Ca(2+) contacts are provided by His-403 and His-435. Positions 562 and 707 each coordinate a 1,2-diacyl-sn-glycero-3-phosphate. One can recognise a PLD phosphodiesterase 2 domain in the interval 702-729; sequence FMIYVHSKGMVVDDEFVLIGSANINQRS. Residues His-707, Lys-709, and Asp-714 contribute to the active site. Position 770 (Glu-770) interacts with Ca(2+).

This sequence belongs to the phospholipase D family. C2-PLD subfamily. Requires Ca(2+) as cofactor. In terms of tissue distribution, highly expressed in roots and flowers, moderately in stems, leaves and seedlings and low in siliques. Not detected in seeds.

Its subcellular location is the cytoplasm. It localises to the membrane. It carries out the reaction a 1,2-diacyl-sn-glycero-3-phosphocholine + H2O = a 1,2-diacyl-sn-glycero-3-phosphate + choline + H(+). Its activity is regulated as follows. Inhibited by neomycin. Its function is as follows. Hydrolyzes glycerol-phospholipids at the terminal phosphodiesteric bond to generate phosphatidic acids (PA). Plays an important role in various cellular processes, including phytohormone action, vesicular trafficking, secretion, cytoskeletal arrangement, meiosis, tumor promotion, pathogenesis, membrane deterioration and senescence. Can use phosphatidylserine but prefers ethanolamine-containing lipids as substrates. Can use phosphatidylcholine (PC) as substrates in the presence of phosphatidylethanolamine (PE) and PIP2. Involved in membrane lipid modulation under aluminum (Al) stress and negatively modulate plant tolerance to Al. The chain is Phospholipase D gamma 2 from Arabidopsis thaliana (Mouse-ear cress).